The following is a 454-amino-acid chain: Arginine biosynthesis bifunctional protein ArgJ, mitochondrial (454 aa).

Residues Thr-184, Lys-213, Thr-224, Glu-311, Asn-449, and Thr-454 each coordinate substrate. The active-site Nucleophile is Thr-224.

It belongs to the ArgJ family. As to quaternary structure, heterodimer of an alpha and a beta chain. Post-translationally, the alpha and beta chains are autoproteolytically processed from a single precursor protein within the mitochondrion.

The protein localises to the mitochondrion matrix. The catalysed reaction is N(2)-acetyl-L-ornithine + L-glutamate = N-acetyl-L-glutamate + L-ornithine. It catalyses the reaction L-glutamate + acetyl-CoA = N-acetyl-L-glutamate + CoA + H(+). It participates in amino-acid biosynthesis; L-arginine biosynthesis; L-ornithine and N-acetyl-L-glutamate from L-glutamate and N(2)-acetyl-L-ornithine (cyclic): step 1/1. It functions in the pathway amino-acid biosynthesis; L-arginine biosynthesis; N(2)-acetyl-L-ornithine from L-glutamate: step 1/4. In terms of biological role, catalyzes two activities which are involved in the cyclic version of arginine biosynthesis: the synthesis of acetylglutamate from glutamate and acetyl-CoA, and of ornithine by transacetylation between acetylornithine and glutamate. This is Arginine biosynthesis bifunctional protein ArgJ, mitochondrial from Aspergillus clavatus (strain ATCC 1007 / CBS 513.65 / DSM 816 / NCTC 3887 / NRRL 1 / QM 1276 / 107).